The chain runs to 159 residues: Cytochrome c-type biogenesis protein CcmE (159 aa).

Residues 1-8 (MNPRRKTR) are Cytoplasmic-facing. The chain crosses the membrane as a helical; Signal-anchor for type II membrane protein span at residues 9–29 (LWVALTVLAGLGLTMALVLYA). At 30–159 (LRANIDLFYT…PPQAYKDNRP (130 aa)) the chain is on the periplasmic side. His130 and Tyr134 together coordinate heme. A disordered region spans residues 130 to 159 (HDENYTPPEVKAAMDANHTRPPQAYKDNRP).

The protein belongs to the CcmE/CycJ family.

It localises to the cell inner membrane. Heme chaperone required for the biogenesis of c-type cytochromes. Transiently binds heme delivered by CcmC and transfers the heme to apo-cytochromes in a process facilitated by CcmF and CcmH. This Cronobacter sakazakii (strain ATCC BAA-894) (Enterobacter sakazakii) protein is Cytochrome c-type biogenesis protein CcmE.